Consider the following 368-residue polypeptide: Biotin synthase (368 aa).

In terms of domain architecture, Radical SAM core spans Cys-74–Arg-309. [4Fe-4S] cluster is bound by residues Cys-92, Cys-96, and Cys-99. [2Fe-2S] cluster contacts are provided by Cys-137, Cys-174, Cys-234, and Arg-304.

This sequence belongs to the radical SAM superfamily. Biotin synthase family. As to quaternary structure, homodimer. [4Fe-4S] cluster is required as a cofactor. The cofactor is [2Fe-2S] cluster.

The enzyme catalyses (4R,5S)-dethiobiotin + (sulfur carrier)-SH + 2 reduced [2Fe-2S]-[ferredoxin] + 2 S-adenosyl-L-methionine = (sulfur carrier)-H + biotin + 2 5'-deoxyadenosine + 2 L-methionine + 2 oxidized [2Fe-2S]-[ferredoxin]. It functions in the pathway cofactor biosynthesis; biotin biosynthesis; biotin from 7,8-diaminononanoate: step 2/2. Catalyzes the conversion of dethiobiotin (DTB) to biotin by the insertion of a sulfur atom into dethiobiotin via a radical-based mechanism. The sequence is that of Biotin synthase from Rippkaea orientalis (strain PCC 8801 / RF-1) (Cyanothece sp. (strain PCC 8801)).